Consider the following 333-residue polypeptide: Holliday junction branch migration complex subunit RuvB (333 aa).

The tract at residues 1–182 (MDERLLSGES…FGVLSRLEYY (182 aa)) is large ATPase domain (RuvB-L). ATP contacts are provided by residues Leu-21, Arg-22, Gly-63, Lys-66, Thr-67, Thr-68, 129-131 (EDF), Arg-172, Tyr-182, and Arg-219. Thr-67 is a binding site for Mg(2+). The interval 183-253 (TVDQLSAIVE…ITQMALELLQ (71 aa)) is small ATPAse domain (RuvB-S). Residues 256–333 (KLGLDHIDHK…EHFGMEMPKV (78 aa)) form a head domain (RuvB-H) region. DNA is bound by residues Arg-311 and Arg-316.

The protein belongs to the RuvB family. Homohexamer. Forms an RuvA(8)-RuvB(12)-Holliday junction (HJ) complex. HJ DNA is sandwiched between 2 RuvA tetramers; dsDNA enters through RuvA and exits via RuvB. An RuvB hexamer assembles on each DNA strand where it exits the tetramer. Each RuvB hexamer is contacted by two RuvA subunits (via domain III) on 2 adjacent RuvB subunits; this complex drives branch migration. In the full resolvosome a probable DNA-RuvA(4)-RuvB(12)-RuvC(2) complex forms which resolves the HJ.

It localises to the cytoplasm. The enzyme catalyses ATP + H2O = ADP + phosphate + H(+). Its function is as follows. The RuvA-RuvB-RuvC complex processes Holliday junction (HJ) DNA during genetic recombination and DNA repair, while the RuvA-RuvB complex plays an important role in the rescue of blocked DNA replication forks via replication fork reversal (RFR). RuvA specifically binds to HJ cruciform DNA, conferring on it an open structure. The RuvB hexamer acts as an ATP-dependent pump, pulling dsDNA into and through the RuvAB complex. RuvB forms 2 homohexamers on either side of HJ DNA bound by 1 or 2 RuvA tetramers; 4 subunits per hexamer contact DNA at a time. Coordinated motions by a converter formed by DNA-disengaged RuvB subunits stimulates ATP hydrolysis and nucleotide exchange. Immobilization of the converter enables RuvB to convert the ATP-contained energy into a lever motion, pulling 2 nucleotides of DNA out of the RuvA tetramer per ATP hydrolyzed, thus driving DNA branch migration. The RuvB motors rotate together with the DNA substrate, which together with the progressing nucleotide cycle form the mechanistic basis for DNA recombination by continuous HJ branch migration. Branch migration allows RuvC to scan DNA until it finds its consensus sequence, where it cleaves and resolves cruciform DNA. The chain is Holliday junction branch migration complex subunit RuvB from Bacillus mycoides (strain KBAB4) (Bacillus weihenstephanensis).